The chain runs to 199 residues: Elongation factor Ts (199 aa).

The segment at 80 to 83 is involved in Mg(2+) ion dislocation from EF-Tu; that stretch reads TDFV.

This sequence belongs to the EF-Ts family.

The protein resides in the cytoplasm. Its function is as follows. Associates with the EF-Tu.GDP complex and induces the exchange of GDP to GTP. It remains bound to the aminoacyl-tRNA.EF-Tu.GTP complex up to the GTP hydrolysis stage on the ribosome. This is Elongation factor Ts from Thermodesulfovibrio yellowstonii (strain ATCC 51303 / DSM 11347 / YP87).